We begin with the raw amino-acid sequence, 878 residues long: Alanine--tRNA ligase (878 aa).

Zn(2+) contacts are provided by histidine 567, histidine 571, cysteine 669, and histidine 673.

The protein belongs to the class-II aminoacyl-tRNA synthetase family. The cofactor is Zn(2+).

The protein localises to the cytoplasm. The catalysed reaction is tRNA(Ala) + L-alanine + ATP = L-alanyl-tRNA(Ala) + AMP + diphosphate. Its function is as follows. Catalyzes the attachment of alanine to tRNA(Ala) in a two-step reaction: alanine is first activated by ATP to form Ala-AMP and then transferred to the acceptor end of tRNA(Ala). Also edits incorrectly charged Ser-tRNA(Ala) and Gly-tRNA(Ala) via its editing domain. The chain is Alanine--tRNA ligase from Rickettsia felis (strain ATCC VR-1525 / URRWXCal2) (Rickettsia azadi).